An 878-amino-acid chain; its full sequence is Pyruvate dehydrogenase phosphatase regulatory subunit, mitochondrial (878 aa).

A mitochondrion-targeting transit peptide spans 1 to 93 (MLYRLLSIVQ…CAGILSTARH (93 aa)).

Belongs to the GcvT family. Heterodimer of a catalytic (PDP1) and a regulatory (PDPR) subunit.

Its subcellular location is the mitochondrion matrix. In terms of biological role, decreases the sensitivity of PDP1 to magnesium ions, and this inhibition is reversed by the polyamine spermine. The sequence is that of Pyruvate dehydrogenase phosphatase regulatory subunit, mitochondrial (Pdpr) from Mus musculus (Mouse).